We begin with the raw amino-acid sequence, 2909 residues long: Micronemal protein 15 (2909 aa).

A signal peptide spans M1–C29. Residues N512, N563, N792, N813, N986, N1007, N1057, N1142, N1319, N1395, and N1713 are each glycosylated (N-linked (GlcNAc...) asparagine). In terms of domain architecture, TSP type-1 1 spans T1755–G1811. The interval R1937–D2073 is disordered. The segment covering S1967–G1977 has biased composition (polar residues). N1976 is a glycosylation site (N-linked (GlcNAc...) asparagine). Basic residues predominate over residues S1978–K1988. Polar residues predominate over residues G2004–Y2016. The span at K2049 to S2065 shows a compositional bias: basic residues. A glycan (N-linked (GlcNAc...) asparagine) is linked at N2333. Positions T2484–P2549 constitute a TSP type-1 2 domain. Cystine bridges form between C2485–C2528, C2496–C2500, and C2542–C2548. Positions E2552–M2587 are disordered. A glycan (N-linked (GlcNAc...) asparagine) is linked at N2706. A helical membrane pass occupies residues T2709–V2729. N-linked (GlcNAc...) asparagine glycosylation is found at N2751, N2768, and N2793. A disordered region spans residues E2759–R2846. A compositionally biased stretch (acidic residues) spans P2801–P2815. The segment covering I2837–R2846 has biased composition (polar residues).

Component of a complex, at least composed of cysteine repeat modular protein A (CRMPa), cysteine repeat modular protein B (CRMPb), micronemal protein 15 (MIC15) and thrombospondin type 1 domain-containing protein (TSP1).

It localises to the membrane. Functionally, required for rhoptry secretion. Plays a role in host cell invasion. This is Micronemal protein 15 from Toxoplasma gondii.